The sequence spans 145 residues: Small ribosomal subunit protein eS19 (145 aa).

Lys23 is modified (N6-acetyllysine). Omega-N-methylarginine is present on Arg67. N6-acetyllysine occurs at positions 111 and 115. Lys143 is subject to N6-succinyllysine.

It belongs to the eukaryotic ribosomal protein eS19 family. Component of the small ribosomal subunit. Part of the small subunit (SSU) processome, composed of more than 70 proteins and the RNA chaperone small nucleolar RNA (snoRNA) U3. Interacts with RPS19BP1.

Its subcellular location is the cytoplasm. It localises to the nucleus. The protein localises to the nucleolus. Functionally, component of the small ribosomal subunit. The ribosome is a large ribonucleoprotein complex responsible for the synthesis of proteins in the cell. Required for pre-rRNA processing and maturation of 40S ribosomal subunits. Part of the small subunit (SSU) processome, first precursor of the small eukaryotic ribosomal subunit. During the assembly of the SSU processome in the nucleolus, many ribosome biogenesis factors, an RNA chaperone and ribosomal proteins associate with the nascent pre-rRNA and work in concert to generate RNA folding, modifications, rearrangements and cleavage as well as targeted degradation of pre-ribosomal RNA by the RNA exosome. The protein is Small ribosomal subunit protein eS19 (Rps19) of Rattus norvegicus (Rat).